Consider the following 267-residue polypeptide: Tryptophan synthase alpha chain (267 aa).

Catalysis depends on proton acceptor residues E47 and D58.

The protein belongs to the TrpA family. As to quaternary structure, tetramer of two alpha and two beta chains.

It catalyses the reaction (1S,2R)-1-C-(indol-3-yl)glycerol 3-phosphate + L-serine = D-glyceraldehyde 3-phosphate + L-tryptophan + H2O. It participates in amino-acid biosynthesis; L-tryptophan biosynthesis; L-tryptophan from chorismate: step 5/5. Its function is as follows. The alpha subunit is responsible for the aldol cleavage of indoleglycerol phosphate to indole and glyceraldehyde 3-phosphate. In Chlorobium limicola (strain DSM 245 / NBRC 103803 / 6330), this protein is Tryptophan synthase alpha chain.